Consider the following 88-residue polypeptide: Small ribosomal subunit protein bS16c (88 aa).

It belongs to the bacterial ribosomal protein bS16 family.

The protein localises to the plastid. It localises to the chloroplast. The protein is Small ribosomal subunit protein bS16c of Sinapis alba (White mustard).